Consider the following 89-residue polypeptide: Small ribosomal subunit protein uS15 (89 aa).

The protein belongs to the universal ribosomal protein uS15 family. In terms of assembly, part of the 30S ribosomal subunit. Forms a bridge to the 50S subunit in the 70S ribosome, contacting the 23S rRNA.

One of the primary rRNA binding proteins, it binds directly to 16S rRNA where it helps nucleate assembly of the platform of the 30S subunit by binding and bridging several RNA helices of the 16S rRNA. Functionally, forms an intersubunit bridge (bridge B4) with the 23S rRNA of the 50S subunit in the ribosome. The polypeptide is Small ribosomal subunit protein uS15 (Rhizobium etli (strain CIAT 652)).